The chain runs to 253 residues: tRNA pseudouridine synthase A (253 aa).

Residue Asp53 is the Nucleophile of the active site. Tyr112 is a binding site for substrate.

Belongs to the tRNA pseudouridine synthase TruA family. Homodimer.

It carries out the reaction uridine(38/39/40) in tRNA = pseudouridine(38/39/40) in tRNA. In terms of biological role, formation of pseudouridine at positions 38, 39 and 40 in the anticodon stem and loop of transfer RNAs. The polypeptide is tRNA pseudouridine synthase A (Lactococcus lactis subsp. cremoris (strain MG1363)).